Consider the following 116-residue polypeptide: Small ribosomal subunit protein uS10m (116 aa).

The protein belongs to the universal ribosomal protein uS10 family.

The protein localises to the mitochondrion. In Reclinomonas americana, this protein is Small ribosomal subunit protein uS10m (RPS10).